A 429-amino-acid chain; its full sequence is Serine/threonine-protein kinase BGLF4 (429 aa).

The disordered stretch occupies residues 1-27 (MDVNMAAELSPTNSSSSGELSVSPEPP). Residues 1–409 (MDVNMAAELS…CRPRFEHPHL (409 aa)) form the Protein kinase domain. Residues 14–23 (SSSSGELSVS) are compositionally biased toward low complexity. The interval 36–40 (KVTVI) is SUMO interaction motif. Residues 110–118 (LYHELMVCD) and Glu-128 contribute to the ATP site. Asp-195 serves as the catalytic Proton acceptor. An SUMO interaction motif region spans residues 344–350 (VVLLEVL).

The protein belongs to the protein kinase superfamily. Ser/Thr protein kinase family. Interacts with host NUP62 and NUP153; this interaction plays a role in nuclear targeting of BGLF4. Interacts with host SUMO1 and SUMO2.

The protein localises to the virion tegument. Its subcellular location is the host nucleus. The enzyme catalyses L-seryl-[protein] + ATP = O-phospho-L-seryl-[protein] + ADP + H(+). The catalysed reaction is L-threonyl-[protein] + ATP = O-phospho-L-threonyl-[protein] + ADP + H(+). In terms of biological role, plays many key roles by phosphorylating several proteins including the viral DNA processivity factor BMRF1, EBNA1 or EBNA2. Modifies the host nuclear envelope structure and induces the redistribution of nuclear envelope-associated proteins by phosphorylating host nucleoporins. Subsequently, promotes the nuclear transport of EBV lytic proteins. Required for efficient lytic DNA replication and release of nucleocapsids from the nucleus. Contributes to the compaction of host cell chromatin in cells undergoing lytic replication, presumably by phosphorylating the host condensin complex and host TOP2A. Induces disassembly of the nuclear lamina by phosphorylating with host LMNA. Phosphorylates substrates involved in capsid assembly and DNA packaging. Facilitates the switch from latent to lytic DNA replication by down-regulating EBNA1 replication function. Phosphorylates the viral immediate-early protein BZLF1 and inhibits its sumoylation by interacting with host SUMO1 and SUMO2. Phosphorylates also host SAMHD1 and thereby counteracts its antiviral effect by reducing its dNTP hydrolase activity. The chain is Serine/threonine-protein kinase BGLF4 from Epstein-Barr virus (strain AG876) (HHV-4).